An 88-amino-acid polypeptide reads, in one-letter code: Small ribosomal subunit protein bS16 (88 aa).

It belongs to the bacterial ribosomal protein bS16 family.

This is Small ribosomal subunit protein bS16 from Geotalea uraniireducens (strain Rf4) (Geobacter uraniireducens).